The following is a 528-amino-acid chain: Protein spinster homolog 1 (528 aa).

The tract at residues 1–49 is disordered; the sequence is MAGSDTAPFLSQADDPDDGPVPGTPGLPGSTGNPKSEEPEVPDQEGLQR. An N-acetylalanine modification is found at Ala-2. The next 12 membrane-spanning stretches (helical) occupy residues 50-70, 98-118, 127-147, 160-180, 187-207, 218-238, 278-298, 323-343, 357-377, 381-401, 421-441, and 465-485; these read ITGL…YINL, GLIQ…FGYL, LMCG…FIPG, VGVG…DLFV, MLSI…IAGS, WALR…FLVV, LGFT…PAFL, LIFG…GVEI, LVCA…LACA, IVAT…NWAI, FQIV…IGLI, and MLCA…AIFI. At Ser-518 the chain carries Phosphoserine.

Belongs to the major facilitator superfamily. Spinster (TC 2.A.1.49) family. As to quaternary structure, interacts with BCL2 and BCL2L1.

The protein localises to the lysosome membrane. It localises to the mitochondrion inner membrane. The catalysed reaction is a 1-acyl-sn-glycero-3-phosphocholine(out) + H(+)(out) = a 1-acyl-sn-glycero-3-phosphocholine(in) + H(+)(in). It carries out the reaction 1-hexadecanoyl-sn-glycero-3-phosphocholine(out) + H(+)(out) = 1-hexadecanoyl-sn-glycero-3-phosphocholine(in) + H(+)(in). It catalyses the reaction 1-(9Z-octadecenoyl)-sn-glycero-3-phosphocholine(out) + H(+)(out) = 1-(9Z-octadecenoyl)-sn-glycero-3-phosphocholine(in) + H(+)(in). The enzyme catalyses 1-(5Z,8Z,11Z,14Z-eicosatetraenoyl)-sn-glycero-3-phosphocholine(out) + H(+)(out) = 1-(5Z,8Z,11Z,14Z-eicosatetraenoyl)-sn-glycero-3-phosphocholine(in) + H(+)(in). The catalysed reaction is 1-(4Z,7Z,10Z,13Z,16Z,19Z-docosahexaenoyl)-sn-glycero-3-phosphocholine(out) + H(+)(out) = 1-(4Z,7Z,10Z,13Z,16Z,19Z-docosahexaenoyl)-sn-glycero-3-phosphocholine(in) + H(+)(in). It carries out the reaction a 1-acyl-sn-glycero-3-phosphoethanolamine(out) + H(+)(out) = a 1-acyl-sn-glycero-3-phosphoethanolamine(in) + H(+)(in). It catalyses the reaction 1-(9Z-octadecenoyl)-sn-glycero-3-phosphoethanolamine(out) + H(+)(out) = 1-(9Z-octadecenoyl)-sn-glycero-3-phosphoethanolamine(in) + H(+)(in). The enzyme catalyses 1-acyl-sn-glycero-3-phospho-(1'-sn-glycerol)(out) + H(+)(out) = 1-acyl-sn-glycero-3-phospho-(1'-sn-glycerol)(in) + H(+)(in). The catalysed reaction is 1-(9Z-octadecenoyl)-sn-glycero-3-phospho-(1'-sn-glycerol)(out) + H(+)(out) = 1-(9Z-octadecenoyl)-sn-glycero-3-phospho-(1'-sn-glycerol)(in) + H(+)(in). It carries out the reaction a 1-O-(1Z-alkenyl)-sn-glycero-3-phosphocholine(out) + H(+)(out) = a 1-O-(1Z-alkenyl)-sn-glycero-3-phosphocholine(in) + H(+)(in). It catalyses the reaction 1-(1Z-hexadecenyl)-sn-glycero-3-phosphocholine(out) + H(+)(out) = 1-(1Z-hexadecenyl)-sn-glycero-3-phosphocholine(in) + H(+)(in). The enzyme catalyses a 1-O-(1Z-alkenyl)-sn-glycero-3-phosphoethanolamine(out) + H(+)(out) = a 1-O-(1Z-alkenyl)-sn-glycero-3-phosphoethanolamine(in) + H(+)(in). The catalysed reaction is 1-O-(1Z-hexadecenyl)-sn-glycero-3-phosphoethanolamine(out) + H(+)(out) = 1-O-(1Z-hexadecenyl)-sn-glycero-3-phosphoethanolamine(in) + H(+)(in). Its function is as follows. Plays a critical role in the phospholipid salvage pathway from lysosomes to the cytosol. Mediates the rate-limiting, proton-dependent, lysosomal efflux of lysophospholipids, which can then be reacylated by acyltransferases in the endoplasmic reticulum to form phospholipids. Selective for zwitterionic headgroups such as lysophosphatidylcholine (LPC) and lysophosphatidylethanolamine (LPE), can also transport lysophosphatidylglycerol (LPG), but not other anionic lysophospholipids, sphingosine, nor sphingomyelin. Transports lysophospholipids with saturated, monounsaturated, and polyunsaturated fatty acids, such as 1-hexadecanoyl-sn-glycero-3-phosphocholine, 1-(9Z-octadecenoyl)-sn-glycero-3-phosphocholine and 1-(4Z,7Z,10Z,13Z,16Z,19Z-docosahexaenoyl)-sn-glycero-3-phosphocholine, respectively. Can also transport lysoplasmalogen (LPC with a fatty alcohol) such as 1-(1Z-hexadecenyl)-sn-glycero-3-phosphocholine. Lysosomal LPC could function as intracellular signaling messenger. Essential player in lysosomal homeostasis. Crucial for cell survival under conditions of nutrient limitation. May be involved in necrotic or autophagic cell death. The sequence is that of Protein spinster homolog 1 (SPNS1) from Homo sapiens (Human).